The primary structure comprises 230 residues: Cytidylate kinase (230 aa).

12–20 (GPSGAGKGT) contributes to the ATP binding site.

This sequence belongs to the cytidylate kinase family. Type 1 subfamily.

It localises to the cytoplasm. It catalyses the reaction CMP + ATP = CDP + ADP. It carries out the reaction dCMP + ATP = dCDP + ADP. The protein is Cytidylate kinase of Yersinia pseudotuberculosis serotype O:1b (strain IP 31758).